A 34-amino-acid chain; its full sequence is Photosystem II reaction center protein T (34 aa).

The helical transmembrane segment at 3–23 threads the bilayer; it reads ALVYTFLLVSTLGIIFFAIFF.

The protein belongs to the PsbT family. As to quaternary structure, PSII is composed of 1 copy each of membrane proteins PsbA, PsbB, PsbC, PsbD, PsbE, PsbF, PsbH, PsbI, PsbJ, PsbK, PsbL, PsbM, PsbT, PsbY, PsbZ, Psb30/Ycf12, at least 3 peripheral proteins of the oxygen-evolving complex and a large number of cofactors. It forms dimeric complexes.

It localises to the plastid. The protein localises to the chloroplast thylakoid membrane. Functionally, found at the monomer-monomer interface of the photosystem II (PS II) dimer, plays a role in assembly and dimerization of PSII. PSII is a light-driven water plastoquinone oxidoreductase, using light energy to abstract electrons from H(2)O, generating a proton gradient subsequently used for ATP formation. The chain is Photosystem II reaction center protein T from Solanum lycopersicum (Tomato).